The sequence spans 366 residues: Carbamoyl phosphate synthase small chain (366 aa).

A CPSase region spans residues methionine 1 to aspartate 168. L-glutamine-binding residues include serine 45, glycine 220, and glycine 222. Residues lysine 172–glutamate 363 enclose the Glutamine amidotransferase type-1 domain. Residue cysteine 247 is the Nucleophile of the active site. L-glutamine-binding residues include leucine 248, glutamine 251, asparagine 289, glycine 291, and phenylalanine 292. Catalysis depends on residues histidine 336 and glutamate 338.

The protein belongs to the CarA family. Composed of two chains; the small (or glutamine) chain promotes the hydrolysis of glutamine to ammonia, which is used by the large (or ammonia) chain to synthesize carbamoyl phosphate. Tetramer of heterodimers (alpha,beta)4.

The catalysed reaction is hydrogencarbonate + L-glutamine + 2 ATP + H2O = carbamoyl phosphate + L-glutamate + 2 ADP + phosphate + 2 H(+). The enzyme catalyses L-glutamine + H2O = L-glutamate + NH4(+). The protein operates within amino-acid biosynthesis; L-arginine biosynthesis; carbamoyl phosphate from bicarbonate: step 1/1. It functions in the pathway pyrimidine metabolism; UMP biosynthesis via de novo pathway; (S)-dihydroorotate from bicarbonate: step 1/3. Functionally, small subunit of the glutamine-dependent carbamoyl phosphate synthetase (CPSase). CPSase catalyzes the formation of carbamoyl phosphate from the ammonia moiety of glutamine, carbonate, and phosphate donated by ATP, constituting the first step of 2 biosynthetic pathways, one leading to arginine and/or urea and the other to pyrimidine nucleotides. The small subunit (glutamine amidotransferase) binds and cleaves glutamine to supply the large subunit with the substrate ammonia. The protein is Carbamoyl phosphate synthase small chain of Methanococcus maripaludis (strain C6 / ATCC BAA-1332).